Here is a 652-residue protein sequence, read N- to C-terminus: ATP-dependent zinc metalloprotease FtsH 1 (652 aa).

Residues 1 to 9 (MSDNKWLRN) are Cytoplasmic-facing. Residues 10-30 (GFVWMILIIAAIAVWVTFVQG) traverse the membrane as a helical segment. Over 31–110 (GRGGATITTQ…QTHRASQWGN (80 aa)) the chain is Extracellular. The helical transmembrane segment at 111-131 (VLGTLTFLLPTLFLIGVIIFM) threads the bilayer. Topologically, residues 132–652 (MRQAQGTNNQ…VPHIKPQPAS (521 aa)) are cytoplasmic. Position 203-210 (203-210 (GPPGTGKT)) interacts with ATP. Residue histidine 425 coordinates Zn(2+). Glutamate 426 is an active-site residue. Zn(2+) is bound by residues histidine 429 and aspartate 501. The segment at 623–652 (IATPETARPDSPSEARPAAPVPHIKPQPAS) is disordered. The span at 641 to 652 (APVPHIKPQPAS) shows a compositional bias: pro residues.

This sequence in the central section; belongs to the AAA ATPase family. The protein in the C-terminal section; belongs to the peptidase M41 family. In terms of assembly, homohexamer. Zn(2+) is required as a cofactor.

The protein resides in the cell membrane. Functionally, acts as a processive, ATP-dependent zinc metallopeptidase for both cytoplasmic and membrane proteins. Plays a role in the quality control of integral membrane proteins. The protein is ATP-dependent zinc metalloprotease FtsH 1 of Thermomicrobium roseum (strain ATCC 27502 / DSM 5159 / P-2).